We begin with the raw amino-acid sequence, 123 residues long: Probable ketoamine kinase in tonB 3'region (123 aa).

The active-site Proton acceptor is Asp26.

It belongs to the fructosamine kinase family.

In terms of biological role, ketoamine kinase that phosphorylates ketoamines on the third carbon of the sugar moiety to generate ketoamine 3-phosphate. The sequence is that of Probable ketoamine kinase in tonB 3'region from Klebsiella pneumoniae.